The following is an 839-amino-acid chain: MKVPMSWLQAMVNLPDGTTTDKVAKALTNHTATVEKVEVVGGELTGPIVIGHILSSVPEPQKNGKVINWCRVDVGPRYNAEGHPKNIEEGVEGRGIICGAPNAVEGAWVVVSLPGAVLPGGFAISARKTYGHMSDGMLCASDELGIGVDDAGIITLPPSVEGHQLVPGEDALPILGVPEEVLDVDVTPDIGYCMSMRGIAREVAHAMSVHFRDPYDEEPIGPVLGPVAVDVQSDACSQFIALPVSGMNLGAPTPRFITDRITRAGMRPINLVVDVTNYVMLESGQPLHAYDADNVSGTIVVRKAHEGEHLLTLDDTDRTLDPDDLVIADDSGAIGLAGVMGGAATEVTAETTSIILEGAHFDPMTVARAYRRHKLGSEASRRFERGVDPICAHTAAVRAAELLAQYGGATVGEPTVVGEVPEMPRQTINADLPNRILGTKVPTEEVIEILTRSGVKVTALGDSLHLVAPTWRPDLVDAYDYVEEIGRKIGFDRIKAVLPPSLGASGLTKAQRGRRRVLRSVVEAGFVELITLPFIGDKDLDVLGISGDDTRHATVKLANPLDDTRPYLRTTLLPGLFHAVTTNMSRSQDDLAVFESGTVFRAVTPAAAPRPGVDERPSDEVLAEIDAALPAQPRMLAAVICGSWLPDRWDGESVKADWRHAVLVAQKAADALGVRLVRKADRQAPWHPGRCAALIVDGKVIGHAGELHPTVVSKAGLPQRTCAVEFNLDALVAAAPRGGEVMAISSFPVAKEDVALVVDKSVAAEDVRQALIEGAGPLLESIELFDVYEGEQVGDNRKSLAFNLRLRGADRTLTDSEALETRDAAVARAEETCGAQLRS.

The tRNA-binding domain occupies 42-166; that stretch reads GELTGPIVIG…PPSVEGHQLV (125 aa). Positions 421 to 496 constitute a B5 domain; the sequence is PEMPRQTINA…RKIGFDRIKA (76 aa). Residues D474, D480, E483, and E484 each contribute to the Mg(2+) site. The 94-residue stretch at 745 to 838 folds into the FDX-ACB domain; it reads SSFPVAKEDV…AEETCGAQLR (94 aa).

The protein belongs to the phenylalanyl-tRNA synthetase beta subunit family. Type 1 subfamily. In terms of assembly, tetramer of two alpha and two beta subunits. Mg(2+) is required as a cofactor.

It is found in the cytoplasm. It catalyses the reaction tRNA(Phe) + L-phenylalanine + ATP = L-phenylalanyl-tRNA(Phe) + AMP + diphosphate + H(+). The polypeptide is Phenylalanine--tRNA ligase beta subunit (Cutibacterium acnes (strain DSM 16379 / KPA171202) (Propionibacterium acnes)).